The sequence spans 74 residues: Defensin-like protein P322 (74 aa).

The N-terminal stretch at 1 to 19 (MRFFATFFLLAMLVVATKM) is a signal peptide. 4 cysteine pairs are disulfide-bonded: Cys-30/Cys-74, Cys-41/Cys-61, Cys-47/Cys-68, and Cys-51/Cys-70.

Belongs to the DEFL family. Protease inhibitor I18 (RTI/MTI-2) subfamily. As to expression, tuber.

Its subcellular location is the secreted. This chain is Defensin-like protein P322, found in Solanum tuberosum (Potato).